The sequence spans 138 residues: Large ribosomal subunit protein uL14 (138 aa).

Belongs to the universal ribosomal protein uL14 family. As to quaternary structure, part of the 50S ribosomal subunit. Forms a cluster with proteins L3 and L24e, part of which may contact the 16S rRNA in 2 intersubunit bridges.

Functionally, binds to 23S rRNA. Forms part of two intersubunit bridges in the 70S ribosome. The chain is Large ribosomal subunit protein uL14 from Metallosphaera sedula (strain ATCC 51363 / DSM 5348 / JCM 9185 / NBRC 15509 / TH2).